Reading from the N-terminus, the 548-residue chain is Tripartite motif-containing protein 55 (548 aa).

The RING-type zinc-finger motif lies at 10-66; sequence FSKEQQTMDNLEKQLICPICLEMFTKPVVILPCQHNLCRKCASDIFQASNPYLPTRG. The segment at 103 to 145 adopts a B box-type zinc-finger fold; the sequence is NIIDIYKQESTRPEKKSDQPMCEEHEEERINIYCLNCEVPTCS. 4 residues coordinate Zn(2+): cysteine 124, histidine 127, cysteine 147, and histidine 153. Residues 168–248 adopt a coiled-coil conformation; the sequence is QKSELSDGIA…EKLEHVRALI (81 aa). One can recognise a COS domain in the interval 269-327; the sequence is MDEPEMAVFLQNAKTLLKKISEASKAFQMEKIEHGYENMNHFTVNLNREEKIIREIDFY. The disordered stretch occupies residues 326-532; it reads FYREDEDEEE…PASGSGADSE (207 aa). Acidic residues-rich tracts occupy residues 328-339 and 347-360; these read REDEDEEEEEGG and GEVGGEAVEVEEVE. 2 stretches are compositionally biased toward low complexity: residues 484 to 496 and 512 to 531; these read VAAAAASERAAVS and EAPPLQGQAAAPASGSGADS.

In terms of assembly, homooligomer and heterooligomer. Interacts with titin/TTN. Interacts with myosins. Interacts with SQSTM1 and NBR1. Isoform 4 may not able to interact with isoform 1, isoform 2 and isoform 3. Probably interacts with TRIM63 and TRIM54. In terms of processing, targeted for degradation through the proteasomal and lysosomal pathways in the presence of SUMO3. In terms of tissue distribution, highly expressed in muscle. Low-level expression in liver.

It is found in the nucleus. The protein localises to the cytoplasm. It catalyses the reaction S-ubiquitinyl-[E2 ubiquitin-conjugating enzyme]-L-cysteine + [acceptor protein]-L-lysine = [E2 ubiquitin-conjugating enzyme]-L-cysteine + N(6)-ubiquitinyl-[acceptor protein]-L-lysine.. Its function is as follows. E3 ubiquitin ligase that plays an important role in regulating cardiac development and contractility, muscle growth, metabolism, and fiber-type differentiation. Acts as a critical factor that regulates cardiomyocyte size during development in concert with TRIM63 by regulating E2F1-mediated gene expression. Plays a role in apoptosis induction in cardiomyocytes by promoting ubiquitination of the DUSP1 phosphatase. Promotes non-canonical NF-kappa-B signaling and B-cell-mediated immune responses by mediating NFKB2 'Lys-48'-linked ubiquitination and processing. In turn, NFKB2 is further processed by valosin-containing protein/VCP, an ATPase that mediates ubiquitin-dependent protein degradation by the proteasome. May play a role in preventing macrophages from producing inflammatory factors and migrating by downregulating the level of nuclear NF-kappa-B subunit RELA. Also modifies PPARG via polyubiquitination and accelerates PPARG proteasomal degradation to inhibit its activity. The chain is Tripartite motif-containing protein 55 (TRIM55) from Homo sapiens (Human).